The sequence spans 642 residues: Threonine--tRNA ligase (642 aa).

Residues 1–61 (MPIITLPDGS…EADASLAIIT (61 aa)) enclose the TGS domain. Positions 243-534 (DHRKIGKQLD…LTEEYAGLFP (292 aa)) are catalytic. Residues C334, H385, and H511 each coordinate Zn(2+).

Belongs to the class-II aminoacyl-tRNA synthetase family. In terms of assembly, homodimer. The cofactor is Zn(2+).

Its subcellular location is the cytoplasm. It carries out the reaction tRNA(Thr) + L-threonine + ATP = L-threonyl-tRNA(Thr) + AMP + diphosphate + H(+). Its function is as follows. Catalyzes the attachment of threonine to tRNA(Thr) in a two-step reaction: L-threonine is first activated by ATP to form Thr-AMP and then transferred to the acceptor end of tRNA(Thr). Also edits incorrectly charged L-seryl-tRNA(Thr). The chain is Threonine--tRNA ligase from Aeromonas hydrophila subsp. hydrophila (strain ATCC 7966 / DSM 30187 / BCRC 13018 / CCUG 14551 / JCM 1027 / KCTC 2358 / NCIMB 9240 / NCTC 8049).